The chain runs to 388 residues: tRNA(Ile)-lysidine synthase (388 aa).

51–56 (SGGRDS) contacts ATP.

It belongs to the tRNA(Ile)-lysidine synthase family.

It is found in the cytoplasm. The catalysed reaction is cytidine(34) in tRNA(Ile2) + L-lysine + ATP = lysidine(34) in tRNA(Ile2) + AMP + diphosphate + H(+). In terms of biological role, ligates lysine onto the cytidine present at position 34 of the AUA codon-specific tRNA(Ile) that contains the anticodon CAU, in an ATP-dependent manner. Cytidine is converted to lysidine, thus changing the amino acid specificity of the tRNA from methionine to isoleucine. The chain is tRNA(Ile)-lysidine synthase from Bifidobacterium longum (strain NCC 2705).